We begin with the raw amino-acid sequence, 1513 residues long: DNA-directed RNA polymerase subunit beta'' (1513 aa).

Cys220, Cys296, Cys303, and Cys306 together coordinate Zn(2+). The disordered stretch occupies residues 644-769 (RTREKDSENE…EYGNPEEDSV (126 aa)). A compositionally biased stretch (basic and acidic residues) spans 659–679 (NEYRTREEECKTLEDEYRTRE). The span at 680–707 (EEYETLEDEYGIPENEYETLEDEYGILE) shows a compositional bias: acidic residues. A compositionally biased stretch (basic and acidic residues) spans 726-737 (NKYRPREDKYGT). Residues 738–767 (LEEDSEDEHGTLEEDSEEDSEDEYGNPEED) are compositionally biased toward acidic residues.

Belongs to the RNA polymerase beta' chain family. RpoC2 subfamily. In plastids the minimal PEP RNA polymerase catalytic core is composed of four subunits: alpha, beta, beta', and beta''. When a (nuclear-encoded) sigma factor is associated with the core the holoenzyme is formed, which can initiate transcription. Requires Zn(2+) as cofactor.

The protein localises to the plastid. Its subcellular location is the chloroplast. It catalyses the reaction RNA(n) + a ribonucleoside 5'-triphosphate = RNA(n+1) + diphosphate. DNA-dependent RNA polymerase catalyzes the transcription of DNA into RNA using the four ribonucleoside triphosphates as substrates. The protein is DNA-directed RNA polymerase subunit beta'' of Oryza nivara (Indian wild rice).